The chain runs to 466 residues: Soluble pyridine nucleotide transhydrogenase (466 aa).

36 to 45 contacts FAD; sequence ERYQNVGGGC.

Belongs to the class-I pyridine nucleotide-disulfide oxidoreductase family. FAD is required as a cofactor.

The protein resides in the cytoplasm. It catalyses the reaction NAD(+) + NADPH = NADH + NADP(+). Its function is as follows. Conversion of NADPH, generated by peripheral catabolic pathways, to NADH, which can enter the respiratory chain for energy generation. This Escherichia coli O9:H4 (strain HS) protein is Soluble pyridine nucleotide transhydrogenase.